Here is a 437-residue protein sequence, read N- to C-terminus: Phosphoethanolamine N-methyltransferase 2 (437 aa).

N-methylethanolamine phosphate is bound by residues 186–187 and tyrosine 195; that span reads QY. S-adenosyl-L-homocysteine is bound by residues 204–205, glycine 232, aspartate 254, 281–282, and arginine 298; these read IS and DA. N-methylethanolamine phosphate is bound by residues tyrosine 329, tyrosine 343, 347–349, and lysine 415; that span reads RAY.

The protein belongs to the class I-like SAM-binding methyltransferase superfamily.

It catalyses the reaction N-methylethanolamine phosphate + S-adenosyl-L-methionine = N,N-dimethylethanolamine phosphate + S-adenosyl-L-homocysteine + H(+). The enzyme catalyses N,N-dimethylethanolamine phosphate + S-adenosyl-L-methionine = phosphocholine + S-adenosyl-L-homocysteine + H(+). Its pathway is phospholipid metabolism; phosphatidylcholine biosynthesis; phosphocholine from phosphoethanolamine. With respect to regulation, feedback inhibition by phosphatidylcholine and also by S-adenosylhomocysteine. Its function is as follows. Catalyzes the last two methylation reactions in the synthesis of phosphocholine, by converting phospho-monomethylethanolamine (N-methylethanolamine phosphate) into phospho-dimethylethanolamine (N,N-dimethylethanolamine phosphate) and the latter into phosphocholine. Phosphocholine is a precursor for phosphatidylcholine, a major component in membranes and a precursor itself in the production of glycoconjugates secreted by parasitic nematodes to avoid host immune responses. The polypeptide is Phosphoethanolamine N-methyltransferase 2 (Caenorhabditis elegans).